The sequence spans 147 residues: MYPAHLLVLLAVCVSLLGASDIPPQPLNLYQFSNMIQCANRGRRPTKHYMDYGCYCGKGGSGTPVDELDRCCKVHDDCYGEAEKSQNCAPYWTWYTWKCGSDGPQCDDSETGCQRSVCECDAIAAKCFAKAPYNDANWDIDTETRCQ.

The first 19 residues, methionine 1 to alanine 19, serve as a signal peptide directing secretion. The propeptide occupies serine 20–leucine 27. 7 disulfides stabilise this stretch: cysteine 38-cysteine 99, cysteine 54-cysteine 146, cysteine 56-cysteine 72, cysteine 71-cysteine 127, cysteine 78-cysteine 120, cysteine 88-cysteine 113, and cysteine 106-cysteine 118. Residues tyrosine 55, glycine 57, and glycine 59 each coordinate Ca(2+). Histidine 75 is a catalytic residue. Aspartate 76 serves as a coordination point for Ca(2+). The active site involves aspartate 121.

Belongs to the phospholipase A2 family. Group I subfamily. D49 sub-subfamily. It depends on Ca(2+) as a cofactor. In terms of tissue distribution, expressed by the venom gland.

The protein resides in the secreted. It carries out the reaction a 1,2-diacyl-sn-glycero-3-phosphocholine + H2O = a 1-acyl-sn-glycero-3-phosphocholine + a fatty acid + H(+). Functionally, snake venom phospholipase A2 (PLA2) that inhibits collagen-induced platelet aggregation. PLA2 catalyzes the calcium-dependent hydrolysis of the 2-acyl groups in 3-sn-phosphoglycerides. The sequence is that of Acidic phospholipase A2 S9-53F from Austrelaps superbus (Lowland copperhead snake).